The primary structure comprises 258 residues: Synaptosomal-associated protein 29 (258 aa).

Residues 1-43 form a disordered region; sequence MSAYPRSYNPFDEDAEDEDARPAPWSDSRDLADGPGAPADRQQ. A phosphoserine mark is found at Ser65, Ser77, and Ser114. Residues 76 to 107 are a coiled coil; that stretch reads VSAEELVRQRGALERTEKMVDKMEQDLKTSQK. Disordered stretches follow at residues 127–147 and 161–188; these read PAET…GRLK and QASH…SSEA. A phosphothreonine mark is found at Thr130 and Thr137. The segment covering 131–142 has biased composition (polar residues); the sequence is PSAQNGTLTPQP. Ser163, Ser182, Ser185, Ser204, and Ser210 each carry phosphoserine. A t-SNARE coiled-coil homology domain is found at 196-258; sequence RACHQRIDSN…TSTERKVRQL (63 aa).

The protein belongs to the SNAP-25 family. Forms a SNARE complex, composed of VAMP8, SNAP29 and STX17, involved in fusion of autophagosome with lysosome. Interacts with multiple syntaxins including STX6. Interacts with EIPR1. Interacts with STX17; this interaction is increased in the absence of TMEM39A.

It is found in the cytoplasm. It localises to the golgi apparatus membrane. Its subcellular location is the cytoplasmic vesicle. The protein localises to the autophagosome membrane. The protein resides in the cell projection. It is found in the cilium membrane. Functionally, SNAREs, soluble N-ethylmaleimide-sensitive factor-attachment protein receptors, are essential proteins for fusion of cellular membranes. SNAREs localized on opposing membranes assemble to form a trans-SNARE complex, an extended, parallel four alpha-helical bundle that drives membrane fusion. SNAP29 is a SNARE involved in autophagy through the direct control of autophagosome membrane fusion with the lysososome membrane. Also plays a role in ciliogenesis by regulating membrane fusions. In Bos taurus (Bovine), this protein is Synaptosomal-associated protein 29.